Reading from the N-terminus, the 1704-residue chain is Vitellogenin-1 (1704 aa).

An N-terminal signal peptide occupies residues 1–14; it reads MKAVVLALTLAFVA. The Vitellogenin domain maps to 22-660; that stretch reads FAAGKTYVYK…DAATFMPKSF (639 aa). Residues Asn446, Asn635, Asn903, Asn908, Asn1019, Asn1054, Asn1080, Asn1121, Asn1174, Asn1285, Asn1322, Asn1375, Asn1379, Asn1405, Asn1456, and Asn1512 are each glycosylated (N-linked (GlcNAc...) asparagine). Positions 1078 to 1109 are enriched in low complexity; the sequence is RRNSSSSSSSSSSSSSESRSSRSSSSSSSSSR. The segment at 1078 to 1213 is disordered; that stretch reads RRNSSSSSSS…SSDRRSKEVM (136 aa). The segment covering 1122-1204 has biased composition (low complexity); the sequence is SSSSSSSRRS…FSDSSSSSSS (83 aa). One can recognise a VWFD domain in the interval 1442-1617; it reads AECSFVEDTL…SWILPAESCR (176 aa). Cystine bridges form between Cys1444–Cys1580 and Cys1467–Cys1616.

Post-translationally, phosvitin, an egg yolk storage protein, is one of the most highly phosphorylated (10%) proteins in nature. In terms of processing, the N-terminal of the blood vitellogenin is blocked. Produced by the liver, secreted into the blood and then sequestered by receptor mediated endocytosis into growing oocytes, where it is generally cleaved, giving rise to the respective yolk components composed of complex suite of small cleavage products.

Functionally, precursor of the major egg-yolk proteins that are sources of nutrients during early development of oviparous organisms. In Fundulus heteroclitus (Killifish), this protein is Vitellogenin-1 (vtg1).